The sequence spans 150 residues: Auxin-binding protein 5 (150 aa).

A signal peptide spans 1–41 (MVRRRPATGAAQRPQLAAVGRGLLLASVLAAAASSLPVAES). The Zn(2+) site is built by H98, H100, and E104. N-linked (GlcNAc...) asparagine glycosylation occurs at N136. Residue H147 participates in Zn(2+) binding.

In terms of assembly, homodimer.

Its subcellular location is the endoplasmic reticulum lumen. Functionally, this is probably a receptor for the plant hormone auxin. The sequence is that of Auxin-binding protein 5 (ABP5) from Zea mays (Maize).